We begin with the raw amino-acid sequence, 611 residues long: Protein spaetzle 3 (611 aa).

The first 14 residues, 1–14 (MALTNFSLPFGALG), serve as a signal peptide directing secretion. An N-linked (GlcNAc...) asparagine glycan is attached at asparagine 5. A disordered region spans residues 57–322 (EYFKNNPYAP…NDKSNNNQMP (266 aa)). Low complexity-rich tracts occupy residues 104-120 (QQVQQTQQQQTQQQHQQ), 127-153 (SVSFQSSSSRSSSSSTTGQSSIQLTQT), and 169-185 (PGQQAQPPQQQQPQQKQ). Polar residues predominate over residues 191 to 210 (GSASATFTKNSGSFSITSFG). The span at 218-239 (PPQPQQPPPSQQQQPPPAPPPQ) shows a compositional bias: pro residues. The span at 288–306 (YDVEEGEEDEEEDGEEEGQ) shows a compositional bias: acidic residues. 2 N-linked (GlcNAc...) asparagine glycosylation sites follow: asparagine 335 and asparagine 351. The tract at residues 477-518 (KKRQAAAGGSRNRGGSAGGSGNGNTNANRQPGNKNGSSGTGR) is disordered. The segment covering 487-498 (RNRGGSAGGSGN) has biased composition (gly residues). A glycan (N-linked (GlcNAc...) asparagine) is linked at asparagine 511. Residues 521–609 (ACESKIEIVT…LFPSCCVCRC (89 aa)) enclose the Spaetzle domain. Disulfide bonds link cysteine 522–cysteine 573, cysteine 559–cysteine 605, and cysteine 567–cysteine 607.

In terms of assembly, homodimer; disulfide-linked.

In terms of biological role, neurotrophin which may function as a ligand to the Toll-related receptor Tollo. Involved in a Tollo and JNK signaling pathway that positively regulates neuromuscular junction (NMJ) growth in presynaptic motorneurons. May function by activating Tollo to promote the phosphorylation of JNK. The protein is Protein spaetzle 3 of Drosophila melanogaster (Fruit fly).